Here is a 332-residue protein sequence, read N- to C-terminus: Leucine carboxyl methyltransferase 1 (332 aa).

A disordered region spans residues M1–G23. S-adenosyl-L-methionine contacts are provided by residues R71, G96, D120, D169–L170, and E196.

The protein belongs to the methyltransferase superfamily. LCMT family.

It catalyses the reaction [phosphatase 2A protein]-C-terminal L-leucine + S-adenosyl-L-methionine = [phosphatase 2A protein]-C-terminal L-leucine methyl ester + S-adenosyl-L-homocysteine. Functionally, methylates the carboxyl group of the C-terminal leucine residue of protein phosphatase 2A catalytic subunits to form alpha-leucine ester residues. This is Leucine carboxyl methyltransferase 1 (LCMT1) from Bos taurus (Bovine).